The primary structure comprises 582 residues: uncharacterized protein (582 aa).

Residues Met1–Ala27 form the signal peptide. Gly residues predominate over residues Gly241–Asn257. The interval Gly241–Thr278 is disordered. Residues Leu258–Thr278 show a composition bias toward low complexity.

This sequence belongs to the mycobacterial PPE family.

This is an uncharacterized protein from Mycobacterium tuberculosis (strain ATCC 25618 / H37Rv).